The sequence spans 146 residues: Large ribosomal subunit protein uL15 (146 aa).

Basic and acidic residues predominate over residues 1–18 (MKLHELKPSEGSRKERNR). Residues 1–50 (MKLHELKPSEGSRKERNRVGRGTGSGNGKTSGRGHKGQKARSGGGVRLGF) form a disordered region. Over residues 21–31 (RGTGSGNGKTS) the composition is skewed to gly residues.

Belongs to the universal ribosomal protein uL15 family. Part of the 50S ribosomal subunit.

Binds to the 23S rRNA. This is Large ribosomal subunit protein uL15 from Listeria welshimeri serovar 6b (strain ATCC 35897 / DSM 20650 / CCUG 15529 / CIP 8149 / NCTC 11857 / SLCC 5334 / V8).